Reading from the N-terminus, the 371-residue chain is 4-hydroxybutyrate dehydrogenase (371 aa).

NAD(+) contacts are provided by residues 88–92 (GSVID), 126–130 (TTCGT), and lysine 148. Aspartate 182, histidine 186, histidine 253, and histidine 267 together coordinate Fe cation. Histidine 267 contacts NAD(+).

The protein belongs to the iron-containing alcohol dehydrogenase family. Homodimer. Fe(2+) serves as cofactor. The cofactor is Cu(2+).

It carries out the reaction 4-hydroxybutanoate + NAD(+) = succinate semialdehyde + NADH + H(+). Its activity is regulated as follows. Inactivated by oxygen. Its function is as follows. Involved in the anaerobic succinate degradation pathway. Catalyzes the interconversion of gamma-hydroxybutyrate (GHB) and succinic semialdehyde (SSA). This is 4-hydroxybutyrate dehydrogenase from Clostridium kluyveri (strain ATCC 8527 / DSM 555 / NBRC 12016 / NCIMB 10680 / K1).